The sequence spans 162 residues: Large ribosomal subunit protein uL15 (162 aa).

Residues M1–T13 are compositionally biased toward basic and acidic residues. The segment at M1–G37 is disordered. The span at R21–V35 shows a compositional bias: gly residues.

Belongs to the universal ribosomal protein uL15 family. As to quaternary structure, part of the 50S ribosomal subunit.

Functionally, binds to the 23S rRNA. In Methylobacterium nodulans (strain LMG 21967 / CNCM I-2342 / ORS 2060), this protein is Large ribosomal subunit protein uL15.